The sequence spans 254 residues: Proteasome subunit alpha (254 aa).

The tract at residues 231–254 (ESGAASADGEAETEAETDSGSDEE) is disordered. A compositionally biased stretch (acidic residues) spans 239 to 254 (GEAETEAETDSGSDEE).

The protein belongs to the peptidase T1A family. In terms of assembly, the 20S proteasome core is composed of 14 alpha and 14 beta subunits that assemble into four stacked heptameric rings, resulting in a barrel-shaped structure. The two inner rings, each composed of seven catalytic beta subunits, are sandwiched by two outer rings, each composed of seven alpha subunits. The catalytic chamber with the active sites is on the inside of the barrel. Has probably a gated structure, the ends of the cylinder being occluded by the N-termini of the alpha-subunits. Is likely capped by the proteasome-associated ATPase, ARC. The N-terminus is blocked.

Its subcellular location is the cytoplasm. Its pathway is protein degradation; proteasomal Pup-dependent pathway. Its activity is regulated as follows. The formation of the proteasomal ATPase ARC-20S proteasome complex, likely via the docking of the C-termini of ARC into the intersubunit pockets in the alpha-rings, may trigger opening of the gate for substrate entry. Interconversion between the open-gate and close-gate conformations leads to a dynamic regulation of the 20S proteasome proteolysis activity. Peptidolytic activity is completely inhibited by lactacystin, and to a lesser extent, by N-acetyl-Leu-Leu-norleucinal (Ac-LLnL) and benzoyloxycarbonyl-Leu-Leu-Leu-vinylsulfone (Z-LLL-VS) in vitro. Functionally, component of the proteasome core, a large protease complex with broad specificity involved in protein degradation. The S.coelicolor proteasome is able to cleave oligopeptides after hydrophobic residues, but not after basic or acidic residues, thus displaying chymotrypsin-like activity but not trypsin-like activity. The sequence is that of Proteasome subunit alpha from Streptomyces coelicolor (strain ATCC BAA-471 / A3(2) / M145).